A 1161-amino-acid polypeptide reads, in one-letter code: Mitogen-activated protein kinase kinase kinase (1161 aa).

Positions 56 to 120 (GDGSLWTALY…PKDFVTDEDP (65 aa)) constitute an SH3 domain. The Protein kinase domain occupies 142–402 (LDIKEVIGSG…KEILKQLESI (261 aa)). ATP-binding positions include 148-156 (IGSGGFCKV) and lysine 169. The active-site Proton acceptor is the aspartate 264. Threonine 300 is subject to Phosphothreonine; by autocatalysis. Position 304 is a phosphoserine; by autocatalysis (serine 304). Leucine-zipper regions lie at residues 426–447 (IAGVLHDLREKEKELRNKEEQL) and 461–482 (LKIREQNLRERERVLIERELVM). A phosphoserine mark is found at serine 525 and serine 560. 2 disordered regions span residues 560–615 (SQLS…GSGG) and 658–678 (TTNNNNNNNNSISANNNNQLN). Over residues 571 to 583 (AQTSTHSSFSKSA) the composition is skewed to polar residues. Residues 591–601 (QQQNQQQVASL) are compositionally biased toward low complexity. Serine 685, serine 773, and serine 792 each carry phosphoserine. The disordered stretch occupies residues 790–830 (GNSPAVGRKKHSLDSSSHHPPANGSNSFALPNQLTLPSEDN). The segment covering 812–830 (NGSNSFALPNQLTLPSEDN) has biased composition (polar residues). The residue at position 862 (threonine 862) is a Phosphothreonine. 3 disordered regions span residues 988 to 1014 (RSASPSLSSSSTTASASPSIASTEAVN), 1045 to 1093 (EQRQ…SAGS), and 1137 to 1161 (GGSSRSLKRKGKKPQTQSCEQLERC). Residues 989-1010 (SASPSLSSSSTTASASPSIAST) are compositionally biased toward low complexity. Residue serine 993 is modified to Phosphoserine. A compositionally biased stretch (basic residues) spans 1052–1063 (NQKKQRPKHITK). Over residues 1073 to 1086 (GQHHEHDDHNDPQH) the composition is skewed to basic and acidic residues. Positions 1150 to 1161 (PQTQSCEQLERC) are enriched in polar residues.

Belongs to the protein kinase superfamily. STE Ser/Thr protein kinase family. MAP kinase kinase kinase subfamily. As to quaternary structure, homodimer. Requires Mg(2+) as cofactor. Autophosphorylation on serine and threonine residues within the activation loop plays a role in enzyme activation. As to expression, expressed both maternally and zygotically. Expressed uniformly in large quantities in the early embryo (stages 1-4). In the late embryo, expression is ubiquitous, but expression levels are dramatically reduced. Expressed in the adult head and thorax, and in S2 cells.

The catalysed reaction is L-seryl-[protein] + ATP = O-phospho-L-seryl-[protein] + ADP + H(+). The enzyme catalyses L-threonyl-[protein] + ATP = O-phospho-L-threonyl-[protein] + ADP + H(+). Its activity is regulated as follows. Homodimerization via the leucine zipper domains is required for autophosphorylation and subsequent activation. Activated by C6-ceramide. In terms of biological role, activates the JUN N-terminal pathway during dorsal closure. This is Mitogen-activated protein kinase kinase kinase from Drosophila melanogaster (Fruit fly).